The chain runs to 487 residues: Lysophospholipid acyltransferase 5 (487 aa).

The residue at position 2 (A2) is an N-acetylalanine. The next 6 helical transmembrane spans lie at 44-64 (LIIS…YLFY), 84-104 (FNFG…FLIL), 111-131 (ITAV…GYYY), 180-200 (GVPS…FLVG), 227-247 (IIPA…YTLL), and 285-305 (VTCW…FNGF). Residues N338 and H374 contribute to the active site. A run of 3 helical transmembrane segments spans residues 364-384 (GLSL…LVCF), 422-442 (LVQQ…FCLF), and 453-473 (SIYF…PYIH). The Di-lysine motif signature appears at 484 to 487 (KKME).

It belongs to the membrane-bound acyltransferase family. In terms of tissue distribution, highly expressed in liver, pancreas and adipose tissue. Very low expression in skeletal muscle and heart. Detected in neutrophils.

It is found in the endoplasmic reticulum membrane. The enzyme catalyses a 1-acyl-sn-glycero-3-phosphocholine + an acyl-CoA = a 1,2-diacyl-sn-glycero-3-phosphocholine + CoA. It carries out the reaction a 1-acyl-sn-glycero-3-phosphoethanolamine + an acyl-CoA = a 1,2-diacyl-sn-glycero-3-phosphoethanolamine + CoA. It catalyses the reaction a 1-acyl-sn-glycero-3-phospho-L-serine + an acyl-CoA = a 1,2-diacyl-sn-glycero-3-phospho-L-serine + CoA. The catalysed reaction is (9Z,12Z)-octadecadienoyl-CoA + a 1-acyl-sn-glycero-3-phosphocholine = 1-acyl-2-(9Z,12Z)-octadecadienoyl-sn-glycero-3-phosphocholine + CoA. The enzyme catalyses (5Z,8Z,11Z,14Z)-eicosatetraenoyl-CoA + a 1-acyl-sn-glycero-3-phosphocholine = 1-acyl-2-(5Z,8Z,11Z,14Z-eicosatetraenoyl)-sn-glycero-3-phosphocholine + CoA. It carries out the reaction dodecanoyl-CoA + 1-hexadecanoyl-sn-glycero-3-phosphocholine = 1-hexadecanoyl-2-dodecanoyl-sn-glycero-3-phosphocholine + CoA. It catalyses the reaction octadecanoyl-CoA + 1-hexadecanoyl-sn-glycero-3-phosphocholine = 1-hexadecanoyl-2-octadecanoyl-sn-glycero-3-phosphocholine + CoA. The catalysed reaction is 1-dodecanoyl-sn-glycero-3-phosphocholine + hexadecanoyl-CoA = 1-dodecanoyl-2-hexadecanoyl-sn-glycero-3-phosphocholine + CoA. The enzyme catalyses 1-tetradecanoyl-sn-glycero-3-phosphocholine + hexadecanoyl-CoA = 1-tetradecanoyl-2-hexadecanoyl-sn-glycero-3-phosphocholine + CoA. It carries out the reaction 1-hexadecanoyl-sn-glycero-3-phosphocholine + hexadecanoyl-CoA = 1,2-dihexadecanoyl-sn-glycero-3-phosphocholine + CoA. It catalyses the reaction 1-octadecanoyl-sn-glycero-3-phosphocholine + hexadecanoyl-CoA = 1-octadecanoyl-2-hexadecanoyl-sn-glycero-3-phosphocholine + CoA. The catalysed reaction is 1-(9Z-octadecenoyl)-sn-glycero-3-phosphocholine + hexadecanoyl-CoA = 1-(9Z-octadecenoyl)-2-hexadecanoyl-sn-glycero-3-phosphocholine + CoA. The enzyme catalyses (9Z)-hexadecenoyl-CoA + 1-hexadecanoyl-sn-glycero-3-phosphocholine = 1-hexadecanoyl-2-(9Z-hexadecenoyl)-sn-glycero-3-phosphocholine + CoA. It carries out the reaction 1-hexadecanoyl-sn-glycero-3-phosphocholine + (9Z)-octadecenoyl-CoA = 1-hexadecanoyl-2-(9Z-octadecenoyl)-sn-glycero-3-phosphocholine + CoA. It catalyses the reaction (9Z,12Z)-octadecadienoyl-CoA + 1-hexadecanoyl-sn-glycero-3-phosphocholine = 1-hexadecanoyl-2-(9Z,12Z-octadecadienoyl)-sn-glycero-3-phosphocholine + CoA. The catalysed reaction is 1-dodecanoyl-sn-glycero-3-phosphocholine + (5Z,8Z,11Z,14Z)-eicosatetraenoyl-CoA = 1-dodecanoyl-2-(5Z,8Z,11Z,14Z)-eicosatetraenoyl-sn-glycero-3-phosphocholine + CoA. The enzyme catalyses (5Z,8Z,11Z,14Z)-eicosatetraenoyl-CoA + 1-hexadecanoyl-sn-glycero-3-phosphocholine = 1-hexadecanoyl-2-(5Z,8Z,11Z,14Z-eicosatetraenoyl)-sn-glycero-3-phosphocholine + CoA. It carries out the reaction 1-octadecanoyl-sn-glycero-3-phosphocholine + (5Z,8Z,11Z,14Z)-eicosatetraenoyl-CoA = 1-octadecanoyl-2-(5Z,8Z,11Z,14Z-eicosatetraenoyl)-sn-glycero-3-phosphocholine + CoA. It catalyses the reaction 1-eicosanoyl-sn-glycero-3-phosphocholine + (5Z,8Z,11Z,14Z)-eicosatetraenoyl-CoA = 1-eicosanoyl-2-(5Z,8Z,11Z,14Z)-eicosatetraenoyl-sn-glycero-3-phosphocholine + CoA. The catalysed reaction is 1-(9Z-octadecenoyl)-sn-glycero-3-phosphocholine + (9Z)-octadecenoyl-CoA = 1,2-di-(9Z-octadecenoyl)-sn-glycero-3-phosphocholine + CoA. The enzyme catalyses 1-(9Z-octadecenoyl)-sn-glycero-3-phosphocholine + (9Z,12Z)-octadecadienoyl-CoA = 1-(9Z)-octadecenoyl-2-(9Z,12Z)-octadecadienoyl-sn-glycero-3-phosphocholine + CoA. It carries out the reaction 1-(9Z-octadecenoyl)-sn-glycero-3-phosphocholine + (5Z,8Z,11Z,14Z)-eicosatetraenoyl-CoA = 1-(9Z)-octadecenoyl-2-(5Z,8Z,11Z,14Z)-icosatetraenoyl-sn-glycero-3-phosphocholine + CoA. It catalyses the reaction a 1-acyl-sn-glycero-3-phosphoethanolamine + (9Z,12Z)-octadecadienoyl-CoA = 1-acyl-2-(9Z,12Z)-octadecadienoyl-sn-glycero-3-phosphoethanolamine + CoA. The catalysed reaction is 1-(9Z-octadecenoyl)-sn-glycero-3-phosphoethanolamine + (9Z,12Z)-octadecadienoyl-CoA = 1-(9Z)-octadecenoyl-2-(9Z,12Z)-octadecadienoyl-sn-glycero-3-phosphoethanolamine + CoA. The enzyme catalyses 1-(10Z-heptadecenoyl)-sn-glycero-3-phosphoethanolamine + (9Z,12Z)-octadecadienoyl-CoA = 1-(10Z-heptadecenoyl)-2-(9Z,12Z-octadecadienoyl)-sn-glycero-3-phosphoethanolamine + CoA. It carries out the reaction a 1-acyl-sn-glycero-3-phosphoethanolamine + (5Z,8Z,11Z,14Z)-eicosatetraenoyl-CoA = 1-acyl-2-(5Z,8Z,11Z,14Z)-eicosatetraenoyl-sn-glycero-3-phosphoethanolamine + CoA. It catalyses the reaction 1-hexadecanoyl-sn-glycero-3-phosphoethanolamine + (5Z,8Z,11Z,14Z)-eicosatetraenoyl-CoA = 1-hexadecanoyl-2-(5Z,8Z,11Z,14Z-eicosatetraenoyl)-sn-glycero-3-phosphoethanolamine + CoA. The catalysed reaction is 1-(9Z-octadecenoyl)-sn-glycero-3-phosphoethanolamine + (5Z,8Z,11Z,14Z)-eicosatetraenoyl-CoA = 1-(9Z)-octadecenoyl-2-(5Z,8Z,11Z,14Z)-eicosatetraenoyl-sn-glycero-3-phosphoethanolamine + CoA. The enzyme catalyses 1-(10Z-heptadecenoyl)-sn-glycero-3-phosphoethanolamine + (5Z,8Z,11Z,14Z)-eicosatetraenoyl-CoA = 1-(10Z-heptadecenoyl)-2-(5Z,8Z,11Z,14Z-eicosatetraenoyl)-sn-glycero-3-phosphoethanolamine + CoA. It carries out the reaction a 1-O-(1Z-alkenyl)-sn-glycero-3-phosphoethanolamine + (5Z,8Z,11Z,14Z)-eicosatetraenoyl-CoA = 1-O-(1Z)-alkenyl-2-(5Z,8Z,11Z,14Z)-eicosatetraenoyl-sn-glycero-3-phosphoethanolamine + CoA. It catalyses the reaction a 1-acyl-sn-glycero-3-phospho-L-serine + (9Z,12Z)-octadecadienoyl-CoA = 1-acyl-2-(9Z,12Z-octadecadienoyl)-sn-glycero-3-phospho-L-serine + CoA. The catalysed reaction is a 1-acyl-sn-glycero-3-phospho-L-serine + (5Z,8Z,11Z,14Z)-eicosatetraenoyl-CoA = 1-acyl-2-(5Z,8Z,11Z,14Z-eicosatetraenoyl)-sn-glycero-3-phospho-L-serine + CoA. The enzyme catalyses 1-hexadecanoyl-sn-glycero-3-phospho-L-serine + (9Z)-octadecenoyl-CoA = 1-hexadecanoyl-2-(9Z-octadecenoyl)-sn-glycero-3-phospho-L-serine + CoA. It carries out the reaction 1-(9Z-octadecenoyl)-sn-glycero-3-phospho-L-serine + (9Z)-octadecenoyl-CoA = 1,2-di-(9Z)-octadecenoyl-sn-glycero-3-phospho-L-serine + CoA. It catalyses the reaction 1-hexadecanoyl-sn-glycero-3-phospho-L-serine + (9Z,12Z)-octadecadienoyl-CoA = 1-hexadecanoyl-2-(9Z,12Z-octadecadienoyl)-sn-glycero-3-phospho-L-serine + CoA. The catalysed reaction is 1-(9Z-octadecenoyl)-sn-glycero-3-phospho-L-serine + (9Z,12Z)-octadecadienoyl-CoA = 1-(9Z-octadecenoyl)-2-(9Z,12Z-octadienoyl)-sn-glycero-3-phospho-L-serine + CoA. The enzyme catalyses 1-hexadecanoyl-sn-glycero-3-phospho-L-serine + (5Z,8Z,11Z,14Z)-eicosatetraenoyl-CoA = 1-hexadecanoyl-2-(5Z,8Z,11Z,14Z-eicosatetraenoyl)-sn-glycero-3-phospho-L-serine + CoA. It carries out the reaction 1-(9Z-octadecenoyl)-sn-glycero-3-phospho-L-serine + (5Z,8Z,11Z,14Z)-eicosatetraenoyl-CoA = 1-(9Z-octadecenoyl)-2-(5Z,8Z,11Z,14Z-eicosatetraenoyl)-sn-glycero-3-phospho-L-serine + CoA. It participates in lipid metabolism; phospholipid metabolism. With respect to regulation, activity is inhibited by thimerosal. In terms of biological role, lysophospholipid O-acyltransferase (LPLAT) that catalyzes the reacylation step of the phospholipid remodeling process also known as the Lands cycle. Catalyzes transfer of the fatty acyl chain from fatty acyl-CoA to 1-acyl lysophospholipid to form various classes of phospholipids. Converts 1-acyl lysophosphatidylcholine (LPC) into phosphatidylcholine (PC) (LPCAT activity), 1-acyl lysophosphatidylserine (LPS) into phosphatidylserine (PS) (LPSAT activity) and 1-acyl lysophosphatidylethanolamine (LPE) into phosphatidylethanolamine (PE) (LPEAT activity). Favors polyunsaturated fatty acyl-CoAs as acyl donors compared to saturated fatty acyl-CoAs. Has higher activity for LPC acyl acceptors compared to LPEs and LPSs. Can also transfer the fatty acyl chain from fatty acyl-CoA to 1-O-alkyl lysophospholipid or 1-O-alkenyl lysophospholipid with lower efficiency. Acts as a major LPC O-acyltransferase in liver and intestine. As a component of the liver X receptor/NR1H3 or NR1H2 signaling pathway, mainly catalyzes the incorporation of arachidonate into PCs of endoplasmic reticulum (ER) membranes, increasing membrane dynamics and enabling triacylglycerols transfer to nascent very low-density lipoprotein (VLDL) particles. Promotes processing of sterol regulatory protein SREBF1 in hepatocytes, likely by facilitating the translocation of SREBF1-SCAP complex from ER to the Golgi apparatus. Participates in mechanisms by which the liver X receptor/NR1H3 or NR1H2 signaling pathway counteracts lipid-induced ER stress response and inflammation. Down-regulates hepatic inflammation by limiting arachidonic acid availability for synthesis of inflammatory eicosanoids, such as prostaglandins. In enterocytes, acts as a component of a gut-brain feedback loop that coordinates dietary lipid absorption and food intake. Regulates the abundance of PCs containing linoleate and arachidonate in enterocyte membranes, enabling passive diffusion of fatty acids and cholesterol across the membrane for efficient chylomicron assembly. In the intestinal crypt, acts as a component of dietary-responsive phospholipid-cholesterol axis, regulating the biosynthesis of cholesterol and its mitogenic effects on intestinal stem cells. This is Lysophospholipid acyltransferase 5 (LPCAT3) from Homo sapiens (Human).